The sequence spans 20 residues: Probable cinnamyl alcohol dehydrogenase 1 (20 aa).

Belongs to the zinc-containing alcohol dehydrogenase family. Zn(2+) is required as a cofactor.

The enzyme catalyses (E)-cinnamyl alcohol + NADP(+) = (E)-cinnamaldehyde + NADPH + H(+). The catalysed reaction is (E)-coniferol + NADP(+) = (E)-coniferaldehyde + NADPH + H(+). It carries out the reaction (E)-sinapyl alcohol + NADP(+) = (E)-sinapaldehyde + NADPH + H(+). It catalyses the reaction (E)-4-coumaroyl alcohol + NADP(+) = (E)-4-coumaraldehyde + NADPH + H(+). The enzyme catalyses (E)-caffeyl alcohol + NADP(+) = (E)-caffeyl aldehyde + NADPH + H(+). The protein operates within aromatic compound metabolism; phenylpropanoid biosynthesis. Its function is as follows. Involved in lignin biosynthesis. Catalyzes the final step specific for the production of lignin monomers, like coniferyl alcohol, sinapyl alcohol and 4-coumaryl alcohol. This is Probable cinnamyl alcohol dehydrogenase 1 from Pseudotsuga menziesii (Douglas-fir).